The sequence spans 461 residues: Elongation factor 1-alpha (461 aa).

N,N,N-trimethylglycine is present on glycine 2. Lysine 3 carries the N6,N6-dimethyllysine; alternate modification. Lysine 3 carries the N6-methyllysine; alternate modification. In terms of domain architecture, tr-type G spans 6–241; that stretch reads KTHINVVVIG…DSIEPPKRPT (236 aa). The tract at residues 15 to 22 is G1; the sequence is GHVDSGKS. A GTP-binding site is contributed by 15-22; the sequence is GHVDSGKS. At lysine 31 the chain carries N6-methyllysine. The G2 stretch occupies residues 71 to 75; it reads GITID. Position 80 is an N6,N6,N6-trimethyllysine (lysine 80). The G3 stretch occupies residues 92–95; sequence DAPG. GTP is bound by residues 92 to 96 and 154 to 157; these read DAPGH and NKMD. The tract at residues 154 to 157 is G4; that stretch reads NKMD. Residues 193–195 are G5; the sequence is SGF. At lysine 317 the chain carries N6,N6-dimethyllysine; alternate. N6-methyllysine; alternate is present on lysine 317. Lysine 391 bears the N6-methyllysine mark.

This sequence belongs to the TRAFAC class translation factor GTPase superfamily. Classic translation factor GTPase family. EF-Tu/EF-1A subfamily.

It is found in the cytoplasm. Functionally, this protein promotes the GTP-dependent binding of aminoacyl-tRNA to the A-site of ribosomes during protein biosynthesis. The protein is Elongation factor 1-alpha (TEF) of Pseudoechria curvicolla (Podospora curvicolla).